The following is a 45-amino-acid chain: Bacteriocin fulvocin-C (45 aa).

Its function is as follows. Bacteriocin. The protein is Bacteriocin fulvocin-C of Myxococcus fulvus.